The primary structure comprises 76 residues: uncharacterized protein (76 aa).

This is an uncharacterized protein from Sulfolobus islandicus filamentous virus (isolate Iceland/Hveragerdi) (SIFV).